The chain runs to 231 residues: Ribose-5-phosphate isomerase A (231 aa).

Residues 40-43 (TGST), 93-96 (DGAD), and 106-109 (KGGG) contribute to the substrate site. The active-site Proton acceptor is Glu115. Lys133 is a substrate binding site.

It belongs to the ribose 5-phosphate isomerase family. As to quaternary structure, homodimer.

It catalyses the reaction aldehydo-D-ribose 5-phosphate = D-ribulose 5-phosphate. Its pathway is carbohydrate degradation; pentose phosphate pathway; D-ribose 5-phosphate from D-ribulose 5-phosphate (non-oxidative stage): step 1/1. Its function is as follows. Catalyzes the reversible conversion of ribose-5-phosphate to ribulose 5-phosphate. In Escherichia coli O6:K15:H31 (strain 536 / UPEC), this protein is Ribose-5-phosphate isomerase A.